Consider the following 289-residue polypeptide: 1D-myo-inositol 2-acetamido-2-deoxy-alpha-D-glucopyranoside deacetylase 1 (289 aa).

3 residues coordinate Zn(2+): His-4, Asp-7, and His-140.

Belongs to the MshB deacetylase family. Zn(2+) serves as cofactor.

The catalysed reaction is 1D-myo-inositol 2-acetamido-2-deoxy-alpha-D-glucopyranoside + H2O = 1D-myo-inositol 2-amino-2-deoxy-alpha-D-glucopyranoside + acetate. Its function is as follows. Catalyzes the deacetylation of 1D-myo-inositol 2-acetamido-2-deoxy-alpha-D-glucopyranoside (GlcNAc-Ins) in the mycothiol biosynthesis pathway. In Frankia alni (strain DSM 45986 / CECT 9034 / ACN14a), this protein is 1D-myo-inositol 2-acetamido-2-deoxy-alpha-D-glucopyranoside deacetylase 1.